Here is a 491-residue protein sequence, read N- to C-terminus: GTPase Der (491 aa).

EngA-type G domains are found at residues 3–166 and 200–373; these read PVVA…AEAM and IKLA…DSAT. GTP-binding positions include 9 to 16, 56 to 60, 118 to 121, 206 to 213, 253 to 257, and 318 to 321; these read GRPNVGKS, DTGGI, NKVD, GKPNVGKS, DTAGV, and NKWD. In terms of domain architecture, KH-like spans 374 to 458; the sequence is RRVSTSMLTR…PIQIRFQEGD (85 aa). The interval 472-491 is disordered; the sequence is QERRRKRALSHINDRKTKGE.

This sequence belongs to the TRAFAC class TrmE-Era-EngA-EngB-Septin-like GTPase superfamily. EngA (Der) GTPase family. Associates with the 50S ribosomal subunit.

GTPase that plays an essential role in the late steps of ribosome biogenesis. This is GTPase Der from Shewanella denitrificans (strain OS217 / ATCC BAA-1090 / DSM 15013).